Here is a 488-residue protein sequence, read N- to C-terminus: Glutamyl-tRNA(Gln) amidotransferase subunit A (488 aa).

Active-site charge relay system residues include Lys77 and Ser152. Ser176 functions as the Acyl-ester intermediate in the catalytic mechanism.

Belongs to the amidase family. GatA subfamily. Heterotrimer of A, B and C subunits.

It catalyses the reaction L-glutamyl-tRNA(Gln) + L-glutamine + ATP + H2O = L-glutaminyl-tRNA(Gln) + L-glutamate + ADP + phosphate + H(+). In terms of biological role, allows the formation of correctly charged Gln-tRNA(Gln) through the transamidation of misacylated Glu-tRNA(Gln) in organisms which lack glutaminyl-tRNA synthetase. The reaction takes place in the presence of glutamine and ATP through an activated gamma-phospho-Glu-tRNA(Gln). The protein is Glutamyl-tRNA(Gln) amidotransferase subunit A of Streptococcus pyogenes serotype M5 (strain Manfredo).